Reading from the N-terminus, the 486-residue chain is MDITRLTIKEARKLLDNREISALELTRTYLDRINTLDGKVESYLSVTEDMALKQAEQAQNLIDYGKASLLTGIPLSIKDNICIEGTKTTCASKMLEDFVSPYTATAVDKLFADNAVILGKTNLDEFAMGGSTENSAFKITKNPFDLTRVPGGSSGGSAACVSASLALGSLGSDTGGSVRQPASFCGVVGMKPTYGLVSRYGLVAFASSFDQIGPIAKTVEDCAIILDSICGNDPKDATSLKYENDSSYSSSVSGDIKGFKFGLPKEYLTEGLNAEVKESLYKSIDKLESMGAKIEEFSMPVLKHAVPAYYLMSSAEASSNLSRYDGVKYGYRADNCKSFNELIGKSRAEGFGKEVKRRILLGTYSLASGYYDAYYKKALKLRTLISNGFNEAFTKYDVVLHPTTPETAFKIGQNSNSPLAMYLADIYTVAVNIAGLPSISLPCGYDSNGLPIGLSFTGKPLGEKDIFRAAASFEAEFSDKFRVPAI.

Active-site charge relay system residues include lysine 78 and serine 153. Serine 177 serves as the catalytic Acyl-ester intermediate.

This sequence belongs to the amidase family. GatA subfamily. Heterotrimer of A, B and C subunits.

It carries out the reaction L-glutamyl-tRNA(Gln) + L-glutamine + ATP + H2O = L-glutaminyl-tRNA(Gln) + L-glutamate + ADP + phosphate + H(+). In terms of biological role, allows the formation of correctly charged Gln-tRNA(Gln) through the transamidation of misacylated Glu-tRNA(Gln) in organisms which lack glutaminyl-tRNA synthetase. The reaction takes place in the presence of glutamine and ATP through an activated gamma-phospho-Glu-tRNA(Gln). The sequence is that of Glutamyl-tRNA(Gln) amidotransferase subunit A from Ruminiclostridium cellulolyticum (strain ATCC 35319 / DSM 5812 / JCM 6584 / H10) (Clostridium cellulolyticum).